The following is a 180-amino-acid chain: Crossover junction endodeoxyribonuclease RuvC (180 aa).

Residues Asp7, Glu66, and Asp138 contribute to the active site. Residues Asp7, Glu66, and Asp138 each contribute to the Mg(2+) site.

The protein belongs to the RuvC family. In terms of assembly, homodimer which binds Holliday junction (HJ) DNA. The HJ becomes 2-fold symmetrical on binding to RuvC with unstacked arms; it has a different conformation from HJ DNA in complex with RuvA. In the full resolvosome a probable DNA-RuvA(4)-RuvB(12)-RuvC(2) complex forms which resolves the HJ. Mg(2+) serves as cofactor.

The protein resides in the cytoplasm. It carries out the reaction Endonucleolytic cleavage at a junction such as a reciprocal single-stranded crossover between two homologous DNA duplexes (Holliday junction).. The RuvA-RuvB-RuvC complex processes Holliday junction (HJ) DNA during genetic recombination and DNA repair. Endonuclease that resolves HJ intermediates. Cleaves cruciform DNA by making single-stranded nicks across the HJ at symmetrical positions within the homologous arms, yielding a 5'-phosphate and a 3'-hydroxyl group; requires a central core of homology in the junction. The consensus cleavage sequence is 5'-(A/T)TT(C/G)-3'. Cleavage occurs on the 3'-side of the TT dinucleotide at the point of strand exchange. HJ branch migration catalyzed by RuvA-RuvB allows RuvC to scan DNA until it finds its consensus sequence, where it cleaves and resolves the cruciform DNA. This chain is Crossover junction endodeoxyribonuclease RuvC, found in Burkholderia pseudomallei (strain 668).